The chain runs to 111 residues: Small ribosomal subunit protein uS15c (111 aa).

It belongs to the universal ribosomal protein uS15 family. Part of the 30S ribosomal subunit.

The protein localises to the plastid. The protein resides in the chloroplast. In Staurastrum punctulatum (Green alga), this protein is Small ribosomal subunit protein uS15c (rps15).